The following is a 483-amino-acid chain: Regulatory protein ViaA (483 aa).

This sequence belongs to the ViaA family. As to quaternary structure, homodimer. Interacts with RavA.

It localises to the cytoplasm. Its function is as follows. Component of the RavA-ViaA chaperone complex, which may act on the membrane to optimize the function of some of the respiratory chains. ViaA stimulates the ATPase activity of RavA. The chain is Regulatory protein ViaA from Escherichia coli O139:H28 (strain E24377A / ETEC).